The chain runs to 213 residues: ATP synthase peripheral stalk subunit OSCP, mitochondrial (213 aa).

A mitochondrion-targeting transit peptide spans 1–23 (MAAPAVSGVSQQVRYFGTSVVRP). An SIFI-degron motif is present at residues 5–23 (AVSGVSQQVRYFGTSVVRP). 4 positions are modified to N6-acetyllysine: Lys-54, Lys-60, Lys-70, and Lys-73. The residue at position 90 (Lys-90) is an N6-succinyllysine. 2 positions are modified to N6-acetyllysine; alternate: Lys-158 and Lys-162. An N6-succinyllysine; alternate mark is found at Lys-158 and Lys-162. An N6-acetyllysine mark is found at Lys-172, Lys-176, and Lys-192. N6-succinyllysine is present on Lys-199.

Belongs to the ATPase delta chain family. As to quaternary structure, component of the ATP synthase complex composed at least of ATP5F1A/subunit alpha, ATP5F1B/subunit beta, ATP5MC1/subunit c (homooctomer), MT-ATP6/subunit a, MT-ATP8/subunit 8, ATP5ME/subunit e, ATP5MF/subunit f, ATP5MG/subunit g, ATP5MK/subunit k, ATP5MJ/subunit j, ATP5F1C/subunit gamma, ATP5F1D/subunit delta, ATP5F1E/subunit epsilon, ATP5PF/subunit F6, ATP5PB/subunit b, ATP5PD/subunit d, ATP5PO/subunit OSCP. ATP synthase complex consists of a soluble F(1) head domain (subunits alpha(3) and beta(3)) - the catalytic core - and a membrane F(0) domain - the membrane proton channel (subunits c, a, 8, e, f, g, k and j). These two domains are linked by a central stalk (subunits gamma, delta, and epsilon) rotating inside the F1 region and a stationary peripheral stalk (subunits F6, b, d, and OSCP). In terms of processing, acetylation at Lys-162 decreases ATP production. Deacetylated by SIRT3. Post-translationally, in response to mitochondrial stress, the precursor protein is ubiquitinated by the SIFI complex in the cytoplasm before mitochondrial import, leading to its degradation. Within the SIFI complex, UBR4 initiates ubiquitin chain that are further elongated or branched by KCMF1.

The protein localises to the mitochondrion. It localises to the mitochondrion inner membrane. In terms of biological role, subunit OSCP, of the mitochondrial membrane ATP synthase complex (F(1)F(0) ATP synthase or Complex V) that produces ATP from ADP in the presence of a proton gradient across the membrane which is generated by electron transport complexes of the respiratory chain. ATP synthase complex consist of a soluble F(1) head domain - the catalytic core - and a membrane F(1) domain - the membrane proton channel. These two domains are linked by a central stalk rotating inside the F(1) region and a stationary peripheral stalk. During catalysis, ATP synthesis in the catalytic domain of F(1) is coupled via a rotary mechanism of the central stalk subunits to proton translocation. In vivo, can only synthesize ATP although its ATP hydrolase activity can be activated artificially in vitro. Part of the complex F(0) domain. Part of the complex F(0) domain and the peripheric stalk, which acts as a stator to hold the catalytic alpha(3)beta(3) subcomplex and subunit a/ATP6 static relative to the rotary elements. This Callithrix jacchus (White-tufted-ear marmoset) protein is ATP synthase peripheral stalk subunit OSCP, mitochondrial.